Here is a 1372-residue protein sequence, read N- to C-terminus: Disease resistance protein RRS1B (1372 aa).

In terms of domain architecture, TIR spans 2 to 137; sequence TESEQIVYIS…ETVRDVYEKL (136 aa). An NB-ARC domain is found at 166–417; the sequence is VGIWGMPGIG…GCGFFPHVGI (252 aa). Residue 170-177 participates in ATP binding; it reads GMPGIGKT. An LRR 1 repeat occupies 491-515; that stretch reads PEEIEGMFLDTSNLSFDIKHVAFDN. The stretch at 528 to 544 is one LRR 2; degenerate repeat; sequence NPEVHHVNNFLKGSLSS. LRR repeat units follow at residues 545–568, 570–591, 614–637, 638–658, 659–681, 693–718, 723–747, 749–767, 768–792, and 798–823; these read LPNVLRLLHWENYPLQFLPQNFDP, HLVEINMPYSQLKKLWGGTKDL, AQNLEVVDLQGCTRLQSFPATGQL, LHLRVVNLSGCTEIKSFPEIP, PNIETLNLQGTGIIELPLSIVKP, IPGLSGVSNLEQSDLKPLTSLMKIST, PGKLSCLELNDCSRLRSLPNMVNLE, LKALDLSGCSELETIQGFP, RNLKELYLVGTAVRQVPQLPQSLEF, and CVSLKSIRLDFKKLPVHYTFSNCFDL. The Nuclear localization signal motif lies at 950–964; it reads INLHCWALGKAVERD. The segment at residues 1174 to 1240 is a DNA-binding region (WRKY); it reads DRGSRSSDLW…YISEHNHPFP (67 aa). Disordered stretches follow at residues 1246–1288 and 1337–1372; these read LAGS…ASPP and QTMFLSRRSSGGNMEAQGKNSSDDREVNLPSKILNR. Over residues 1249-1269 the composition is skewed to low complexity; it reads STRSSSSKCSDVTTSASSTVS. The span at 1270-1279 shows a compositional bias: basic and acidic residues; it reads QDKEGPDKSH. The span at 1337–1348 shows a compositional bias: polar residues; the sequence is QTMFLSRRSSGG.

The protein belongs to the disease resistance TIR-NB-LRR family. As to quaternary structure, interacts with RPS4B. RPS4B-RRS1B heterodimer interacts with the bacterial effectors AvrRps4 and PopP2.

It localises to the nucleus. Transcription factor. Interacts specifically with the W box (5'-(T)TGAC[CT]-3'), a frequently occurring elicitor-responsive cis-acting element. Also acts as a disease resistance protein that specifically recognizes the AvrRps4 type III effector avirulence protein from P.syringae. Heterodimerization with RPS4B is required to form a functional complex to recognize AvrRps4 and to mediate the hypersensitive response. This is Disease resistance protein RRS1B from Arabidopsis thaliana (Mouse-ear cress).